The sequence spans 276 residues: Undecaprenyl-diphosphatase 2 (276 aa).

Transmembrane regions (helical) follow at residues 1–21, 44–64, 87–107, 114–134, 150–170, 190–210, 222–242, and 251–271; these read MSLW…LFPV, QLLP…LWYF, GHLM…GLLL, VFHD…LLWL, MTFK…IPGF, AAEF…VLEL, DALL…RFLM, and LASF…WFML.

It belongs to the UppP family.

Its subcellular location is the cell inner membrane. It catalyses the reaction di-trans,octa-cis-undecaprenyl diphosphate + H2O = di-trans,octa-cis-undecaprenyl phosphate + phosphate + H(+). Catalyzes the dephosphorylation of undecaprenyl diphosphate (UPP). Confers resistance to bacitracin. The chain is Undecaprenyl-diphosphatase 2 from Burkholderia orbicola (strain AU 1054).